We begin with the raw amino-acid sequence, 186 residues long: MAAEDTSVSGVSGRYATALFELARDQKAVDEVKADLDRFEALLGESADLKRLVRSPVFAADAQSRALTAVLDKVGIAGISANFLKVLTANRRLFVVADVIRAYRALVAKFKGEATADVTVAEALSDKNLDALKVALKSVTGKDVALNVKVDPSIIGGLVVKLGSRMVDGSLRTKLNSIKHAMKEAG.

It belongs to the ATPase delta chain family. As to quaternary structure, F-type ATPases have 2 components, F(1) - the catalytic core - and F(0) - the membrane proton channel. F(1) has five subunits: alpha(3), beta(3), gamma(1), delta(1), epsilon(1). F(0) has three main subunits: a(1), b(2) and c(10-14). The alpha and beta chains form an alternating ring which encloses part of the gamma chain. F(1) is attached to F(0) by a central stalk formed by the gamma and epsilon chains, while a peripheral stalk is formed by the delta and b chains.

It is found in the cell inner membrane. Functionally, f(1)F(0) ATP synthase produces ATP from ADP in the presence of a proton or sodium gradient. F-type ATPases consist of two structural domains, F(1) containing the extramembraneous catalytic core and F(0) containing the membrane proton channel, linked together by a central stalk and a peripheral stalk. During catalysis, ATP synthesis in the catalytic domain of F(1) is coupled via a rotary mechanism of the central stalk subunits to proton translocation. Its function is as follows. This protein is part of the stalk that links CF(0) to CF(1). It either transmits conformational changes from CF(0) to CF(1) or is implicated in proton conduction. The chain is ATP synthase subunit delta from Bradyrhizobium diazoefficiens (strain JCM 10833 / BCRC 13528 / IAM 13628 / NBRC 14792 / USDA 110).